A 913-amino-acid polypeptide reads, in one-letter code: Cadherin-4 (913 aa).

Positions 1–19 (MRTGSRLLLVLLVWGSAAA) are cleaved as a signal peptide. Positions 20–166 (LNGDLTVRPT…SAKGLRRQKR (147 aa)) are excised as a propeptide. Cadherin domains are found at residues 167-274 (DWVI…RPEF), 275-389 (INQV…PPEF), 390-504 (TTST…APYF), 505-610 (PTNH…DNAP), and 611-721 (ELLP…TIGA). Over 167 to 731 (DWVIPPINVP…VAAAGLGTGA (565 aa)) the chain is Extracellular. N-linked (GlcNAc...) asparagine glycosylation is found at asparagine 280, asparagine 409, asparagine 554, asparagine 629, asparagine 658, and asparagine 699. The chain crosses the membrane as a helical span at residues 732–753 (IIAILICIIILLTMVLLFVVWM). The Cytoplasmic segment spans residues 754–913 (KRREKERHTK…ADMYGGGEED (160 aa)).

As to expression, embryonic brain and neuronal retina.

Its subcellular location is the cell membrane. Functionally, cadherins are calcium-dependent cell adhesion proteins. They preferentially interact with themselves in a homophilic manner in connecting cells; cadherins may thus contribute to the sorting of heterogeneous cell types. May play an important role in retinal development. This is Cadherin-4 (CDH4) from Gallus gallus (Chicken).